The following is a 96-amino-acid chain: Co-chaperonin GroES (96 aa).

The protein belongs to the GroES chaperonin family. In terms of assembly, heptamer of 7 subunits arranged in a ring. Interacts with the chaperonin GroEL.

The protein resides in the cytoplasm. Functionally, together with the chaperonin GroEL, plays an essential role in assisting protein folding. The GroEL-GroES system forms a nano-cage that allows encapsulation of the non-native substrate proteins and provides a physical environment optimized to promote and accelerate protein folding. GroES binds to the apical surface of the GroEL ring, thereby capping the opening of the GroEL channel. The protein is Co-chaperonin GroES of Haemophilus influenzae (strain 86-028NP).